The primary structure comprises 105 residues: Large ribosomal subunit protein eL36 (105 aa).

It belongs to the eukaryotic ribosomal protein eL36 family. In terms of assembly, component of the large ribosomal subunit.

The protein resides in the cytoplasm. Its subcellular location is the cytosol. Component of the large ribosomal subunit. The ribosome is a large ribonucleoprotein complex responsible for the synthesis of proteins in the cell. The polypeptide is Large ribosomal subunit protein eL36 (RPL36) (Gallus gallus (Chicken)).